A 316-amino-acid polypeptide reads, in one-letter code: Insulin-like growth factor-binding protein 2 (316 aa).

Positions 1-29 (MLPRLGGTALSLLPLLLLLLGTGGRGARA) are cleaved as a signal peptide. Residues 31–126 (VLFRCPPCTP…VLGEGTCEKR (96 aa)) form the IGFBP N-terminal domain. Intrachain disulfides connect cysteine 35–cysteine 76, cysteine 38–cysteine 78, cysteine 46–cysteine 79, cysteine 68–cysteine 82, cysteine 90–cysteine 103, and cysteine 97–cysteine 123. A disordered region spans residues 189–217 (QHRQMGKGGKHHLGLEEPKKLRPPPARTP). In terms of domain architecture, Thyroglobulin type-1 spans 215-297 (RTPCQQELDQ…APTIRGDPEC (83 aa)). 3 cysteine pairs are disulfide-bonded: cysteine 218/cysteine 252, cysteine 263/cysteine 274, and cysteine 276/cysteine 297. A Cell attachment site motif is present at residues 292-294 (RGD).

Interacts with IGF1. Interacts with IGF2. Interacts (via RGD motif) with integrin alpha5/ITGA5; this interaction induces cell migration, adhesion or apoptosis according to the context. Interacts with PTPRB; this interaction leads to PTPRB dimerization and inactivation. Post-translationally, cleaved by MMP9 leading to release of free IGF2 from IGFBP2-IGF2 complex, which contributes to enhance the motility and the growth of astrocytes. O-glycosylated.

Its subcellular location is the secreted. Functionally, may have both growth-inhibiting and growth-promoting effects, depending on tissue type; increases IGF-induced DNA synthesis in the uterine epithelium. IGF-binding proteins prolong the half-life of the IGFs and have been shown to either inhibit or stimulate the growth promoting effects of the IGFs on cell culture. They alter the interaction of IGFs with their cell surface receptors. Multifunctional protein that plays a critical role in regulating the availability of IGFs such as IGF1 and IGF2 to their receptors and thereby regulates IGF-mediated cellular processes including proliferation, differentiation, and apoptosis in a cell-type specific manner. Functions coordinately with receptor protein tyrosine phosphatase beta/PTPRB and the IGF1 receptor to regulate IGF1-mediated signaling by stimulating the phosphorylation of PTEN leading to its inactivation and AKT1 activation. Plays a positive role in cell migration via interaction with integrin alpha5/ITGA5 through an RGD motif. Additionally, interaction with ITGA5/ITGB1 enhances the adhesion of endothelial progenitor cells to endothelial cells. Upon mitochondrial damage, facilitates apoptosis with ITGA5 of podocytes, and then activates the phosphorylation of focal adhesion kinase (FAK)-mediated mitochondrial injury. The protein is Insulin-like growth factor-binding protein 2 (IGFBP2) of Sus scrofa (Pig).